The sequence spans 209 residues: Uridine kinase (209 aa).

ATP is bound at residue 12-19 (GGSGGGKT).

Belongs to the uridine kinase family.

It localises to the cytoplasm. The catalysed reaction is uridine + ATP = UMP + ADP + H(+). It catalyses the reaction cytidine + ATP = CMP + ADP + H(+). It participates in pyrimidine metabolism; CTP biosynthesis via salvage pathway; CTP from cytidine: step 1/3. Its pathway is pyrimidine metabolism; UMP biosynthesis via salvage pathway; UMP from uridine: step 1/1. This is Uridine kinase from Streptococcus agalactiae serotype III (strain NEM316).